The following is a 998-amino-acid chain: MVVTKPATQRPRLPSVGRLGLVDPQAAERMAQLGWYDHDDQAHVDLLWALSRAPDPDAALLALVRLAETPDAGWDELGAALLTERPLRGRLFAVLGSSLALGDHLVAQPRSWKLLRGNVSLPTHDELCAMFTGCVDEALADPGSAMVRLRTLYRDRLLVLAALDLAATVEDEPVLPFTVVAAHLSDLADAALAAALRVAEHNVCGDRTPPRLAVIAMGKCGARELNYVSDVDVIFVGERADTVTTRVASEMMRLASEAFFQVDAGLRPEGRSGELVRTVESHIAYYQRWAKTWEFQALLKARAAVGDAELGRRYLDALMPMVWVACEREDFVVEVQAMRRRVEQLVPADVRGREIKLGSGGLRDVEFAVQLLQLVHGRSDESLHVASTVDALAALGQGGYIGREDAANLTASYEFLRLLEHRLQLQRLKRTHLLPEADDEEAVRWLARAAHIRPDGRHDAAGVLREELRHQNLRVSQLHAKLFYQPLLESIGPAGLEIRHGMTSEAAERQLAALGYEGPQSALKHMSALVNQSGRRGRVQSVLLPRLLNWMSYAPDPDGGLLAYRRLSEALAGESWYLSTLRDKPAVARRLMHVLGTSAYVPDLLMRAPRVIQDYGDGPSGPRLLETDPAAVARALVASASRYSDPVRAIAGARTLRRRELARVASADLLGMLEVTDVCKALTSVWVAVLQAALDAMIRANLPDDGPQRGKAPAAIAVIGMGRLGGAELGYGSDADVMFVCEPAPGVDDSAAVRWAASVAEQVRTLLGTPSVDPPLDVDANLRPEGRNGPLVRTLASYAACYEQWAQPWEIQALLRAHAVAGDAELGHRFLLMADKTRYPADGVSPEAVREIRRIKARVDAERLPRGADPNTHTKLGRGGLADIEWTVQLLQLLHAHEVPALHNTSTLECLDAIAEAGLVPADEVDLLRQAWLTATRARNALVLVRGKPTDQLPGPGRQLNAVAVAAGWPTDEGGEFLDNYLRVTRRAKAVVCKVFGS.

The adenylyl removase stretch occupies residues 1–487 (MVVTKPATQR…LHAKLFYQPL (487 aa)). The interval 492 to 998 (GPAGLEIRHG…KAVVCKVFGS (507 aa)) is adenylyl transferase.

The protein belongs to the GlnE family. Mg(2+) is required as a cofactor.

It carries out the reaction [glutamine synthetase]-O(4)-(5'-adenylyl)-L-tyrosine + phosphate = [glutamine synthetase]-L-tyrosine + ADP. The enzyme catalyses [glutamine synthetase]-L-tyrosine + ATP = [glutamine synthetase]-O(4)-(5'-adenylyl)-L-tyrosine + diphosphate. Its function is as follows. Involved in the regulation of glutamine synthetase GlnA, a key enzyme in the process to assimilate ammonia. When cellular nitrogen levels are high, the C-terminal adenylyl transferase (AT) inactivates GlnA by covalent transfer of an adenylyl group from ATP to specific tyrosine residue of GlnA, thus reducing its activity. Conversely, when nitrogen levels are low, the N-terminal adenylyl removase (AR) activates GlnA by removing the adenylyl group by phosphorolysis, increasing its activity. The regulatory region of GlnE binds the signal transduction protein PII (GlnB) which indicates the nitrogen status of the cell. The polypeptide is Bifunctional glutamine synthetase adenylyltransferase/adenylyl-removing enzyme (Mycolicibacterium paratuberculosis (strain ATCC BAA-968 / K-10) (Mycobacterium paratuberculosis)).